The sequence spans 1012 residues: RAS protein activator like-3 (1012 aa).

Disordered stretches follow at residues 1 to 128, 147 to 196, and 208 to 229; these read MDPP…TPDV, GNED…QIHN, and KKAK…ALGS. Positions 7-21 are enriched in polar residues; it reads SRASQTQPVAPSPLT. Residue Ser-18 is modified to Phosphoserine. Positions 27–39 are enriched in gly residues; sequence SGGGAEKGAGGFR. Positions 50–62 are enriched in polar residues; the sequence is QSHQETTASSQPA. Ser-51 carries the post-translational modification Phosphoserine. Acidic residues predominate over residues 100–113; it reads SEPEPENPEPEPEL. Phosphoserine is present on residues Ser-160, Ser-162, Ser-163, and Ser-166. Residues 160-171 are compositionally biased toward low complexity; that stretch reads SASSESSIHVAS. Basic and acidic residues predominate over residues 175 to 186; the sequence is KDPDRTPGKTDP. A PH domain is found at 193–294; that stretch reads QIHNVRGLLK…WIEDLRRHFQ (102 aa). Phosphoserine occurs at positions 212, 225, 229, and 232. Thr-235 carries the post-translational modification Phosphothreonine. Residues 285–405 enclose the C2 domain; that stretch reads WIEDLRRHFQ…APAAGLERWF (121 aa). Positions 475-683 constitute a Ras-GAP domain; sequence GRAQALVTDL…PAMQHFLDQV (209 aa). Residues 752–887 form a disordered region; it reads PAPRTQGHSS…DKDQALGTHR (136 aa). Ser-788 and Ser-791 each carry phosphoserine. The span at 826-841 shows a compositional bias: basic residues; it reads PARRRPSAGPRPRPKG. Residues 889-989 are a coiled coil; the sequence is VGKLAELQCE…KDTIQNLQLL (101 aa). The span at 990–999 shows a compositional bias: polar residues; it reads PRTSESQSQP. Residues 990-1012 form a disordered region; it reads PRTSESQSQPVPLKAPCINGDTT.

It localises to the cytoplasm. It is found in the cell cortex. Functionally, functions as a Ras GTPase-activating protein. Plays an important role in the expansion and functions of natural killer T (NKT) cells in the liver by negatively regulating RAS activity and the down-stream ERK signaling pathway. The polypeptide is RAS protein activator like-3 (RASAL3) (Bos taurus (Bovine)).